The primary structure comprises 352 residues: C5a anaphylatoxin chemotactic receptor 1 (352 aa).

A compositionally biased stretch (polar residues) spans 1–11; it reads MDPISNDSSEI. The segment at 1–20 is disordered; it reads MDPISNDSSEITYDYSDGTP. The Extracellular portion of the chain corresponds to 1–38; the sequence is MDPISNDSSEITYDYSDGTPNPDMPADGVYIPKMEPGD. Residue Asn6 is glycosylated (N-linked (GlcNAc...) asparagine). Sulfotyrosine occurs at positions 13 and 15. The helical transmembrane segment at 39–65 threads the bilayer; it reads IAALIIYLAVFLVGVTGNALVVWVTAF. Residues 66 to 70 lie on the Cytoplasmic side of the membrane; sequence EAKRT. A helical transmembrane segment spans residues 71–94; it reads VNAIWFLNLAVADLLSCLALPILF. Over 95-111 the chain is Extracellular; the sequence is TSIVKHNHWPFGDQACI. A disulfide bridge links Cys110 with Cys189. The helical transmembrane segment at 112–133 threads the bilayer; sequence VLPSLILLNMYSSILLLATISA. Topologically, residues 134–154 are cytoplasmic; the sequence is DRFLLVFKPIWCQKFRRPGLA. The helical transmembrane segment at 155–175 threads the bilayer; it reads WMACGVTWVLALLLTIPSFVF. Over 176–202 the chain is Extracellular; it reads RRIHKDPYSDSILCNIDYSKGPFFIEK. The chain crosses the membrane as a helical span at residues 203-228; sequence AIAILRLMVGFVLPLLTLNICYTFLL. Residues 229 to 244 lie on the Cytoplasmic side of the membrane; it reads IRTWSRKATRSTKTLK. A helical transmembrane segment spans residues 245–267; the sequence is VVMAVVTCFFVFWLPYQVTGVIL. The Extracellular portion of the chain corresponds to 268–284; that stretch reads AWLPRSSSTFQSVERLN. A helical membrane pass occupies residues 285–305; sequence SLCVSLAYINCCVNPIIYVMA. Over 306–352 the chain is Cytoplasmic; sequence GQGFHGRLRRSLPSIIRNVLSEDSLGRDSKSFTRSTMDTSTQKSQAV. Ser316, Ser319, Ser326, Ser329, Ser334, Ser336, and Ser340 each carry phosphoserine. Residues 332 to 352 form a disordered region; that stretch reads RDSKSFTRSTMDTSTQKSQAV. Positions 337–352 are enriched in polar residues; sequence FTRSTMDTSTQKSQAV.

Belongs to the G-protein coupled receptor 1 family. As to quaternary structure, homodimer. May also form higher-order oligomers. Interacts (when phosphorylated) with ARRB1 and ARRB2; the interaction is associated with internalization of C5aR. Sulfation plays a critical role in the association of C5aR with C5a, but no significant role in the ability of the receptor to transduce a signal and mobilize calcium in response to a small peptide agonist. Post-translationally, phosphorylated on serine residues in response to C5a binding, resulting in internalization of the receptor and short-term desensitization to the ligand.

Its subcellular location is the cell membrane. It is found in the cytoplasmic vesicle. In terms of biological role, receptor for the chemotactic and inflammatory peptide anaphylatoxin C5a. The ligand interacts with at least two sites on the receptor: a high-affinity site on the extracellular N-terminus, and a second site in the transmembrane region which activates downstream signaling events. Receptor activation stimulates chemotaxis, granule enzyme release, intracellular calcium release and superoxide anion production. The sequence is that of C5a anaphylatoxin chemotactic receptor 1 (C5ar1) from Rattus norvegicus (Rat).